We begin with the raw amino-acid sequence, 97 residues long: Putative pterin-4-alpha-carbinolamine dehydratase (97 aa).

This sequence belongs to the pterin-4-alpha-carbinolamine dehydratase family.

The catalysed reaction is (4aS,6R)-4a-hydroxy-L-erythro-5,6,7,8-tetrahydrobiopterin = (6R)-L-erythro-6,7-dihydrobiopterin + H2O. The polypeptide is Putative pterin-4-alpha-carbinolamine dehydratase (Ruegeria pomeroyi (strain ATCC 700808 / DSM 15171 / DSS-3) (Silicibacter pomeroyi)).